The chain runs to 292 residues: Bifunctional protein FolD (292 aa).

Residues 165–167, serine 190, and threonine 231 each bind NADP(+); that span reads GRS.

Belongs to the tetrahydrofolate dehydrogenase/cyclohydrolase family. In terms of assembly, homodimer.

It catalyses the reaction (6R)-5,10-methylene-5,6,7,8-tetrahydrofolate + NADP(+) = (6R)-5,10-methenyltetrahydrofolate + NADPH. It carries out the reaction (6R)-5,10-methenyltetrahydrofolate + H2O = (6R)-10-formyltetrahydrofolate + H(+). It functions in the pathway one-carbon metabolism; tetrahydrofolate interconversion. Its function is as follows. Catalyzes the oxidation of 5,10-methylenetetrahydrofolate to 5,10-methenyltetrahydrofolate and then the hydrolysis of 5,10-methenyltetrahydrofolate to 10-formyltetrahydrofolate. The chain is Bifunctional protein FolD from Arthrobacter globiformis.